Consider the following 339-residue polypeptide: D-erythrose-4-phosphate dehydrogenase (339 aa).

Arginine 11–isoleucine 12 is a binding site for NAD(+). Substrate is bound by residues serine 153–threonine 155, arginine 199, threonine 212–lysine 213, and arginine 235. The active-site Nucleophile is cysteine 154. Residue asparagine 317 coordinates NAD(+).

This sequence belongs to the glyceraldehyde-3-phosphate dehydrogenase family. Epd subfamily. As to quaternary structure, homotetramer.

The protein resides in the cytoplasm. It carries out the reaction D-erythrose 4-phosphate + NAD(+) + H2O = 4-phospho-D-erythronate + NADH + 2 H(+). It functions in the pathway cofactor biosynthesis; pyridoxine 5'-phosphate biosynthesis; pyridoxine 5'-phosphate from D-erythrose 4-phosphate: step 1/5. Functionally, catalyzes the NAD-dependent conversion of D-erythrose 4-phosphate to 4-phosphoerythronate. This chain is D-erythrose-4-phosphate dehydrogenase, found in Shewanella halifaxensis (strain HAW-EB4).